Here is a 148-residue protein sequence, read N- to C-terminus: U2 snRNP component IST3 (148 aa).

The 79-residue stretch at 31-109 (AYIYIGNLNR…RALKIDHTFY (79 aa)) folds into the RRM domain.

The protein belongs to the IST3 family. In terms of assembly, component of the 45S U1.U2.U4/U6.U5 penta-snRNP particle, a subcomplex of the spliceosome. Belongs to the CWC complex (or CEF1-associated complex), a spliceosome sub-complex reminiscent of a late-stage spliceosome composed of the U2, U5 and U6 snRNAs and at least BUD13, BUD31, BRR2, CDC40, CEF1, CLF1, CUS1, CWC2, CWC15, CWC21, CWC22, CWC23, CWC24, CWC25, CWC27, ECM2, HSH155, IST3, ISY1, LEA1, MSL1, NTC20, PRP8, PRP9, PRP11, PRP19, PRP21, PRP22, PRP45, PRP46, SLU7, SMB1, SMD1, SMD2, SMD3, SMX2, SMX3, SNT309, SNU114, SPP2, SYF1, SYF2, RSE1 and YJU2. Belongs to the pre-mRNA retention and splicing (RES) complex composed of at least BUD13, IST3 and PML1. Subunit of the U2 snRNP. Interacts with RDS3.

The protein localises to the cytoplasm. It is found in the nucleus. In terms of biological role, required for pre-mRNA splicing and spliceosome assembly. As part of the pre-mRNA retention and splicing (RES) complex, required for nuclear pre-mRNA retention and efficient splicing. Required for MER1-activated splicing. The polypeptide is U2 snRNP component IST3 (IST3) (Saccharomyces cerevisiae (strain ATCC 204508 / S288c) (Baker's yeast)).